The chain runs to 346 residues: tRNA N6-adenosine threonylcarbamoyltransferase (346 aa).

Fe cation-binding residues include histidine 111 and histidine 115. Substrate is bound by residues 134–138 (LVSGG), aspartate 167, glycine 180, and asparagine 279. Aspartate 307 serves as a coordination point for Fe cation.

This sequence belongs to the KAE1 / TsaD family. Fe(2+) serves as cofactor.

It localises to the cytoplasm. It catalyses the reaction L-threonylcarbamoyladenylate + adenosine(37) in tRNA = N(6)-L-threonylcarbamoyladenosine(37) in tRNA + AMP + H(+). Required for the formation of a threonylcarbamoyl group on adenosine at position 37 (t(6)A37) in tRNAs that read codons beginning with adenine. Is involved in the transfer of the threonylcarbamoyl moiety of threonylcarbamoyl-AMP (TC-AMP) to the N6 group of A37, together with TsaE and TsaB. TsaD likely plays a direct catalytic role in this reaction. This is tRNA N6-adenosine threonylcarbamoyltransferase from Burkholderia cenocepacia (strain HI2424).